A 676-amino-acid chain; its full sequence is DNA ligase (676 aa).

NAD(+) contacts are provided by residues 34–38 (DAEYD), 84–85 (SL), and E116. Residue K118 is the N6-AMP-lysine intermediate of the active site. NAD(+)-binding residues include R139, E174, K294, and K318. Zn(2+) contacts are provided by C412, C415, C428, and C433. One can recognise a BRCT domain in the interval 589 to 676 (KGGEALKGLT…RTGKKAEELV (88 aa)).

It belongs to the NAD-dependent DNA ligase family. LigA subfamily. The cofactor is Mg(2+). It depends on Mn(2+) as a cofactor.

It carries out the reaction NAD(+) + (deoxyribonucleotide)n-3'-hydroxyl + 5'-phospho-(deoxyribonucleotide)m = (deoxyribonucleotide)n+m + AMP + beta-nicotinamide D-nucleotide.. Its function is as follows. DNA ligase that catalyzes the formation of phosphodiester linkages between 5'-phosphoryl and 3'-hydroxyl groups in double-stranded DNA using NAD as a coenzyme and as the energy source for the reaction. It is essential for DNA replication and repair of damaged DNA. This chain is DNA ligase, found in Thermus thermophilus (strain ATCC 27634 / DSM 579 / HB8).